A 257-amino-acid polypeptide reads, in one-letter code: Tryptophan synthase alpha chain (257 aa).

Catalysis depends on proton acceptor residues glutamate 44 and aspartate 55.

It belongs to the TrpA family. As to quaternary structure, tetramer of two alpha and two beta chains.

It catalyses the reaction (1S,2R)-1-C-(indol-3-yl)glycerol 3-phosphate + L-serine = D-glyceraldehyde 3-phosphate + L-tryptophan + H2O. It participates in amino-acid biosynthesis; L-tryptophan biosynthesis; L-tryptophan from chorismate: step 5/5. The alpha subunit is responsible for the aldol cleavage of indoleglycerol phosphate to indole and glyceraldehyde 3-phosphate. The chain is Tryptophan synthase alpha chain from Chlamydia caviae (strain ATCC VR-813 / DSM 19441 / 03DC25 / GPIC) (Chlamydophila caviae).